Consider the following 732-residue polypeptide: MDAKTDDQGGKCPFPHGGGSRGHRNRDWWPEQLDINMLHRNSTLSDPLGKAFDYAKEFESLDLDAVIKDLHALMTDSQDWWPADFGHYGGLMIRMAWHSAGTYRTTDGRGGAGAGQQRFAPLNSWPDNANLDKARRLLWPIKQKYGNKISWADLYVLTGNVALESMGFKTFGFAGGRADTWEPEELFWGPEGSWLGDERYSGERQLHDALGAVQMGLIYVNPEGPNGNPDPVAAAKDIRETFARMAMNDEETVALIAGGHTFGKTHGAGDPSLIGAEPEGGALEDQGLGWKSKFGTGFGADAITGGPEVIWTQTPTQWSNFFFENLFGFEWELDKSPAGAKQWKAKGAEATVPDPFDPTKKRVPTMLTTDLSLRFDPAYEKISRRFFENPDQFADAFARAWFKLTHRDMGPKVRYRGKLVPKEDLIWQDPIPPVDHELVSAKDIADLKARILASGLSVSQLVSTAFASASTYRHSDKRGGANGARIRFAPQKDWEVNQPADLAQVLGKLEAIQKAFNDAQSGGKKVSLADLIVLGGSAAVEKAAKDAGTEVEVPFTPGRMDALEEQTDGDSFKVLEPRADGFRNFIGKRHQFMQPEEALVDRAQLLNLTAPEMTVLLGGLRVLGGNVGHDSHGVFTDRPEKLTNDFFVNLLDMKTAWSLSATAEGVYEGRDRKTGDLRWTGTRVDLIFGSHSQLRALAEVYGQSDAQTKFAQDFVAAWTKVMNADRFDLAAK.

The tract at residues 1-26 is disordered; it reads MDAKTDDQGGKCPFPHGGGSRGHRNR. The tryptophyl-tyrosyl-methioninium (Trp-Tyr) (with M-245) cross-link spans 97–219; it reads WHSAGTYRTT…LGAVQMGLIY (123 aa). Histidine 98 functions as the Proton acceptor in the catalytic mechanism. A cross-link (tryptophyl-tyrosyl-methioninium (Tyr-Met) (with W-97)) is located at residues 219 to 245; that stretch reads YVNPEGPNGNPDPVAAAKDIRETFARM. Histidine 260 is a binding site for heme b.

Belongs to the peroxidase family. Peroxidase/catalase subfamily. Homodimer or homotetramer. Heme b is required as a cofactor. Formation of the three residue Trp-Tyr-Met cross-link is important for the catalase, but not the peroxidase activity of the enzyme.

The catalysed reaction is H2O2 + AH2 = A + 2 H2O. The enzyme catalyses 2 H2O2 = O2 + 2 H2O. Functionally, bifunctional enzyme with both catalase and broad-spectrum peroxidase activity. This is Catalase-peroxidase from Rhodopseudomonas palustris (strain BisB5).